The following is a 314-amino-acid chain: Glycerate dehydrogenase (314 aa).

NAD(+) is bound by residues threonine 74, alanine 157–leucine 158, threonine 228–arginine 230, and aspartate 254. Arginine 230 is a catalytic residue. Residue glutamate 259 is part of the active site. Catalysis depends on histidine 280, which acts as the Proton donor. Histidine 280–tryptophan 283 contributes to the NAD(+) binding site.

The protein belongs to the D-isomer specific 2-hydroxyacid dehydrogenase family. Homodimer.

The protein resides in the cytoplasm. The catalysed reaction is (R)-glycerate + NAD(+) = 3-hydroxypyruvate + NADH + H(+). It functions in the pathway one-carbon metabolism; formaldehyde assimilation via serine pathway. Plays a central role in assimilation of carbon. It converts hydroxypyruvate to glycerate as a key step in the serine cycle, and may also play an important role in C2 reactions, by interconverting glyoxylate and glycolate. This Methylorubrum extorquens (strain ATCC 14718 / DSM 1338 / JCM 2805 / NCIMB 9133 / AM1) (Methylobacterium extorquens) protein is Glycerate dehydrogenase (hprA).